Consider the following 404-residue polypeptide: Ethanolamine-phosphate cytidylyltransferase (404 aa).

The tract at residues Tyr-173–Gly-201 is disordered. Polar residues predominate over residues Thr-189–Gly-201. CTP contacts are provided by residues Ala-239–Phe-240, His-247–Phe-250, Lys-277, His-325–Thr-328, and Ser-354–Leu-358. At Ser-356 the chain carries Phosphoserine. Phosphothreonine occurs at positions 359 and 360.

It belongs to the cytidylyltransferase family.

It catalyses the reaction phosphoethanolamine + CTP + H(+) = CDP-ethanolamine + diphosphate. The protein operates within phospholipid metabolism; phosphatidylethanolamine biosynthesis; phosphatidylethanolamine from ethanolamine: step 2/3. In terms of biological role, ethanolamine-phosphate cytidylyltransferase that catalyzes the second step in the synthesis of phosphatidylethanolamine (PE) from ethanolamine via the CDP-ethanolamine pathway. Phosphatidylethanolamine is a dominant inner-leaflet phospholipid in cell membranes, where it plays a role in membrane function by structurally stabilizing membrane-anchored proteins, and participates in important cellular processes such as cell division, cell fusion, blood coagulation, and apoptosis. The polypeptide is Ethanolamine-phosphate cytidylyltransferase (Pcyt2) (Mus musculus (Mouse)).